Here is a 1409-residue protein sequence, read N- to C-terminus: DNA-directed RNA polymerase subunit beta' (1409 aa).

Residues Cys-70, Cys-72, Cys-85, and Cys-88 each coordinate Zn(2+). The Mg(2+) site is built by Asp-461, Asp-463, and Asp-465. The Zn(2+) site is built by Cys-820, Cys-894, Cys-901, and Cys-904.

This sequence belongs to the RNA polymerase beta' chain family. The RNAP catalytic core consists of 2 alpha, 1 beta, 1 beta' and 1 omega subunit. When a sigma factor is associated with the core the holoenzyme is formed, which can initiate transcription. Mg(2+) is required as a cofactor. Requires Zn(2+) as cofactor.

It catalyses the reaction RNA(n) + a ribonucleoside 5'-triphosphate = RNA(n+1) + diphosphate. In terms of biological role, DNA-dependent RNA polymerase catalyzes the transcription of DNA into RNA using the four ribonucleoside triphosphates as substrates. The polypeptide is DNA-directed RNA polymerase subunit beta' (Ralstonia nicotianae (strain ATCC BAA-1114 / GMI1000) (Ralstonia solanacearum)).